The chain runs to 468 residues: Malate-2H(+)/Na(+)-lactate antiporter (468 aa).

The next 12 membrane-spanning stretches (helical) occupy residues 9 to 29, 30 to 50, 73 to 93, 96 to 116, 136 to 156, 192 to 212, 233 to 253, 258 to 278, 309 to 329, 357 to 377, 405 to 425, and 428 to 448; these read LFEI…FTVF, LDLP…LLGI, AVLI…GGVV, LIYY…TLII, IAMI…AGAI, LYLS…VGFM, TFDI…LLAM, MPVI…FQGM, IVGM…GGLL, LIVA…LILT, LTSG…ILGV, and FSYL…IIYG.

Belongs to the NhaC Na(+)/H(+) (TC 2.A.35) antiporter family.

Its subcellular location is the cell membrane. In terms of biological role, couples proton uptake and Na(+) efflux to the substrate-product malate/lactate antiport, in an electroneutral malate-2H(+)/Na(+)-lactate exchange. Plays a role in supporting growth to high density on malate at reduced protonmotive force. The polypeptide is Malate-2H(+)/Na(+)-lactate antiporter (mleN) (Bacillus subtilis (strain 168)).